The chain runs to 339 residues: 3-isopropylmalate dehydrogenase (339 aa).

Substrate contacts are provided by Arg-88, Arg-98, Arg-122, and Asp-212. Mg(2+)-binding residues include Asp-212, Asp-236, and Asp-240. Residue Gly-272–Asp-284 participates in NAD(+) binding.

This sequence belongs to the isocitrate and isopropylmalate dehydrogenases family. LeuB type 2 subfamily. Homodimer. The cofactor is Mg(2+). It depends on Mn(2+) as a cofactor.

The protein resides in the cytoplasm. The catalysed reaction is (2R,3S)-3-isopropylmalate + NAD(+) = 4-methyl-2-oxopentanoate + CO2 + NADH. The protein operates within amino-acid biosynthesis; L-leucine biosynthesis; L-leucine from 3-methyl-2-oxobutanoate: step 3/4. Its function is as follows. Catalyzes the oxidation of 3-carboxy-2-hydroxy-4-methylpentanoate (3-isopropylmalate) to 3-carboxy-4-methyl-2-oxopentanoate. The product decarboxylates to 4-methyl-2 oxopentanoate. This is 3-isopropylmalate dehydrogenase from Corynebacterium aurimucosum (strain ATCC 700975 / DSM 44827 / CIP 107346 / CN-1) (Corynebacterium nigricans).